Consider the following 285-residue polypeptide: Pantothenate synthetase (285 aa).

Methionine 30–histidine 37 contributes to the ATP binding site. Catalysis depends on histidine 37, which acts as the Proton donor. Glutamine 61 lines the (R)-pantoate pocket. Glutamine 61 lines the beta-alanine pocket. Position 149 to 152 (glycine 149 to aspartate 152) interacts with ATP. Glutamine 155 is a (R)-pantoate binding site. Residues isoleucine 178 and leucine 186–arginine 189 contribute to the ATP site.

It belongs to the pantothenate synthetase family. Homodimer.

It localises to the cytoplasm. It catalyses the reaction (R)-pantoate + beta-alanine + ATP = (R)-pantothenate + AMP + diphosphate + H(+). The protein operates within cofactor biosynthesis; (R)-pantothenate biosynthesis; (R)-pantothenate from (R)-pantoate and beta-alanine: step 1/1. Catalyzes the condensation of pantoate with beta-alanine in an ATP-dependent reaction via a pantoyl-adenylate intermediate. This is Pantothenate synthetase from Buchnera aphidicola subsp. Acyrthosiphon pisum (strain 5A).